Here is an 876-residue protein sequence, read N- to C-terminus: MASDASHALEAALEQMDGIIAGTKTGADLSDGTCEPGLASPASYMNPFPVLHLIEDLRLALEMLELPQERAALLSQIPGPTAAYIKEWFEESLSQVNHHSAASNETYQERLARLEGDKESLILQVSVLTDQVEAQGEKIRDLEVCLEGHQVKLNAAEEMLQQELLSRTSLETQKLDLMTEVSELKLKLVGMEKEQREQEEKQRKAEELLQELRHLKIKVEELENERNQYEWKLKATKAEVAQLQEQVALKDAEIERLHSQLSRTAALHSESHTERDQEIQRLKMGMETLLLANEDKDRRIEELTGLLNQYRKVKEIVMVTQGPSERTLSINEEEPEGGFSKWNATNKDPEELFKQEMPPRCSSPTVGPPPLPQKSLETRAQKKLSCSLEDLRSESVDKCMDGNQPFPVLEPKDSPFLAEHKYPTLPGKLSGATPNGEAAKSPPTICQPDATGSSLLRLRDTESGWDDTAVVNDLSSTSSGTESGPQSPLTPDGKRNPKGIKKFWGKIRRTQSGNFYTDTLGMAEFRRGGLRATAGPRLSRTRDSKGQKSDANAPFAQWSTERVCAWLEDFGLAQYVIFARQWVSSGHTLLTATPQDMEKELGIKHPLHRKKLVLAVKAINTKQEEKSALLDHIWVTRWLDDIGLPQYKDQFHESRVDRRMLQYLTVNDLLFLKVTSQLHHLSIKCAIHVLHVNKFNPHCLHRRPADESNLSPSEVVQWSNHRVMEWLRSVDLAEYAPNLRGSGVHGGLIILEPRFTGDTLAMLLNIPPQKTLLRRHLTTKFNALIGPEAEQEKREKMASPAYTPLTTTAKVRPRKLGFSHFGNIRKKKFDESTDYICPMEPSDGVSDSHRVYSGYRGLSPLDAPELDGLDQVGQIS.

A coiled-coil region spans residues 101 to 313; sequence AASNETYQER…TGLLNQYRKV (213 aa). Residues S329, S363, and S387 each carry the phosphoserine modification. The disordered stretch occupies residues 356-376; it reads EMPPRCSSPTVGPPPLPQKSL. Disordered stretches follow at residues 425 to 451 and 470 to 500; these read LPGK…PDAT and VVND…PKGI. Residues 473 to 489 show a composition bias toward polar residues; sequence DLSSTSSGTESGPQSPL. S512 carries the phosphoserine modification. A disordered region spans residues 527–553; that stretch reads RGGLRATAGPRLSRTRDSKGQKSDANA. SAM domains lie at 558–622, 630–693, and 718–783; these read WSTE…INTK, LDHI…LHVN, and WSNH…KFNA.

This sequence belongs to the liprin family. Liprin-beta subfamily. As to quaternary structure, forms homodimers and heterodimers. As to expression, widely expressed.

Its function is as follows. May regulate the disassembly of focal adhesions. Did not bind receptor-like tyrosine phosphatases type 2A. This chain is Liprin-beta-2 (PPFIBP2), found in Homo sapiens (Human).